We begin with the raw amino-acid sequence, 304 residues long: MNSNDQDPIPFRPEDNNFSGSKTYAMSGKIMLSAIVILFFVVILMVFLHLYARWYLLRARRRHLRRRSRNRRATMVFFTADPSTAATSVVASRGLDPNVIKSLPVFTFSDETHKDPIECAVCLSEFEESETGRVLPNCQHTFHVDCIDMWFHSHSTCPLCRSLVESLAGIESTAAAREREVVIAVDSDPVLVIEPSSSSGLTDEPHGSGSSQMLREDSGRKPAAIEVPRRTFSEFEDELTRRDSPASQSFRSPMSRMLSFTRMLSRDRRSASSPIAGAPPLSPTLSCRIQMTESDIERGGEESR.

Residues Ile-30–Leu-50 traverse the membrane as a helical segment. The RING-type; atypical zinc finger occupies Cys-119–Arg-161. Residues Glu-194–Arg-304 are disordered. A compositionally biased stretch (basic and acidic residues) spans Val-227–Ser-244. The segment covering Pro-283–Glu-293 has biased composition (polar residues). Residues Asp-295–Arg-304 show a composition bias toward basic and acidic residues.

The protein belongs to the RING-type zinc finger family. ATL subfamily. In terms of tissue distribution, preferentially expressed around the apical meristem region.

It localises to the membrane. The catalysed reaction is S-ubiquitinyl-[E2 ubiquitin-conjugating enzyme]-L-cysteine + [acceptor protein]-L-lysine = [E2 ubiquitin-conjugating enzyme]-L-cysteine + N(6)-ubiquitinyl-[acceptor protein]-L-lysine.. Its pathway is protein modification; protein ubiquitination. Functionally, may be involved in the early steps of the plant defense signaling pathway. The chain is RING-H2 finger protein ATL2 (ATL2) from Arabidopsis thaliana (Mouse-ear cress).